An 89-amino-acid polypeptide reads, in one-letter code: Envelope protein US9 (89 aa).

Residues 1 to 10 (MTSRPADQDS) are compositionally biased toward basic and acidic residues. Residues 1–21 (MTSRPADQDSVRSSASVPLYP) form a disordered region. Residues 1-66 (MTSRPADQDS…RRRRTRCVGL (66 aa)) lie on the Intravirion side of the membrane. The Internalization motif signature appears at 20–23 (YPAA). The acidic stretch occupies residues 29–38 (EAYYSESEDE). Phosphoserine; by host CK2 is present on residues S33 and S35. The chain crosses the membrane as a helical; Signal-anchor for type II membrane protein span at residues 67–87 (VIACLVVALLSGGFGALLVWL). Topologically, residues 88–89 (LR) are virion surface.

This sequence belongs to the alphaherpesvirinae envelope protein US9 family. Phosphorylated on serines within the acidic cluster, possibly by host CK2. Phosphorylation determines whether endocytosed viral US9 traffics to the trans-Golgi network or recycles to the cell membrane.

It localises to the virion membrane. It is found in the host Golgi apparatus membrane. Its subcellular location is the host smooth endoplasmic reticulum membrane. The protein localises to the host cell membrane. Essential for the anterograde spread of the infection throughout the host nervous system. Together with the gE/gI heterodimer, US9 is involved in the sorting and transport of viral structural components toward axon tips. The chain is Envelope protein US9 from Homo sapiens (Human).